The primary structure comprises 156 residues: Calcium-binding protein A (156 aa).

EF-hand domains are found at residues 4 to 39 (AITK…TGSK), 40 to 75 (DPLR…VAAK), 80 to 115 (AINN…NNPD), and 118 to 153 (APLM…YKSL). Ca(2+)-binding residues include D17, N19, D21, N23, E28, D53, D55, D57, E64, D93, D95, D97, R99, E104, D131, D133, D135, and E142.

The polypeptide is Calcium-binding protein A (cbpA) (Dictyostelium discoideum (Social amoeba)).